The following is a 267-amino-acid chain: 4-hydroxy-tetrahydrodipicolinate reductase (267 aa).

NAD(+)-binding positions include 9–14 (GAAGRM) and aspartate 35. Arginine 36 lines the NADP(+) pocket. NAD(+) is bound by residues 99–101 (GTT) and 123–126 (APNY). Histidine 156 acts as the Proton donor/acceptor in catalysis. Histidine 157 lines the (S)-2,3,4,5-tetrahydrodipicolinate pocket. Lysine 160 acts as the Proton donor in catalysis. 166–167 (GT) contributes to the (S)-2,3,4,5-tetrahydrodipicolinate binding site.

This sequence belongs to the DapB family.

The protein resides in the cytoplasm. It catalyses the reaction (S)-2,3,4,5-tetrahydrodipicolinate + NAD(+) + H2O = (2S,4S)-4-hydroxy-2,3,4,5-tetrahydrodipicolinate + NADH + H(+). It carries out the reaction (S)-2,3,4,5-tetrahydrodipicolinate + NADP(+) + H2O = (2S,4S)-4-hydroxy-2,3,4,5-tetrahydrodipicolinate + NADPH + H(+). Its pathway is amino-acid biosynthesis; L-lysine biosynthesis via DAP pathway; (S)-tetrahydrodipicolinate from L-aspartate: step 4/4. Functionally, catalyzes the conversion of 4-hydroxy-tetrahydrodipicolinate (HTPA) to tetrahydrodipicolinate. The protein is 4-hydroxy-tetrahydrodipicolinate reductase of Alkalilimnicola ehrlichii (strain ATCC BAA-1101 / DSM 17681 / MLHE-1).